The primary structure comprises 172 residues: Protein GrpE (172 aa).

Belongs to the GrpE family. Homodimer.

It is found in the cytoplasm. Participates actively in the response to hyperosmotic and heat shock by preventing the aggregation of stress-denatured proteins, in association with DnaK and GrpE. It is the nucleotide exchange factor for DnaK and may function as a thermosensor. Unfolded proteins bind initially to DnaJ; upon interaction with the DnaJ-bound protein, DnaK hydrolyzes its bound ATP, resulting in the formation of a stable complex. GrpE releases ADP from DnaK; ATP binding to DnaK triggers the release of the substrate protein, thus completing the reaction cycle. Several rounds of ATP-dependent interactions between DnaJ, DnaK and GrpE are required for fully efficient folding. The sequence is that of Protein GrpE from Thermotoga maritima (strain ATCC 43589 / DSM 3109 / JCM 10099 / NBRC 100826 / MSB8).